The chain runs to 1686 residues: A disintegrin and metalloproteinase with thrombospondin motifs 7 (1686 aa).

Residues 1 to 27 (MPGGPSPRSPAPLLRPLLLLLCALAPG) form the signal peptide. A propeptide spanning residues 28 to 236 (APGPAPGRAT…RPRLRRLHQR (209 aa)) is cleaved from the precursor. Residue asparagine 94 is glycosylated (N-linked (GlcNAc...) asparagine). The Cysteine switch motif lies at 202–209 (STCGVQVY). A Zn(2+)-binding site is contributed by cysteine 204. The 211-residue stretch at 242–452 (KWVETLVVAD…GWGLCLDDPP (211 aa)) folds into the Peptidase M12B domain. 11 disulfide bridges follow: cysteine 318/cysteine 372, cysteine 347/cysteine 354, cysteine 366/cysteine 447, cysteine 405/cysteine 431, cysteine 474/cysteine 497, cysteine 485/cysteine 503, cysteine 492/cysteine 522, cysteine 516/cysteine 527, cysteine 550/cysteine 587, cysteine 554/cysteine 592, and cysteine 565/cysteine 577. Histidine 388 lines the Zn(2+) pocket. The active site involves glutamate 389. Residues histidine 392 and histidine 398 each coordinate Zn(2+). A Disintegrin domain is found at 462–537 (VPPGVLYDVS…VPVGFRPEAV (76 aa)). Residues 538-593 (DGGWSGWSAWSICSRSCGMGVQSAERQCTQPTPKYKGRYCVGERKRFRLCNLQACP) form the TSP type-1 1 domain. Asparagine 693 and asparagine 778 each carry an N-linked (GlcNAc...) asparagine glycan. A spacer region spans residues 698 to 809 (HTVSGTFEEA…PGVHYEYTIH (112 aa)). TSP type-1 domains lie at 821–880 (PVFS…QPCP), 881–940 (ARWW…NRHV), and 942–995 (CPAT…PLCR). Disordered stretches follow at residues 1024–1043 (HHLA…TMGN), 1080–1257 (PSEE…SPDV), and 1344–1396 (LGHM…PLAP). Residues 1182 to 1205 (DGLQTPATPESQNDFPVGKDSQSQ) show a composition bias toward polar residues. Basic and acidic residues predominate over residues 1210–1226 (WRDRTNEVFKDDEEPKG). The span at 1360–1375 (PESLSPEVPLSSRLLS) shows a compositional bias: low complexity. TSP type-1 domains lie at 1411–1459 (RNAG…RRCH), 1462–1522 (PCAT…QPCL), 1523–1567 (SWYT…PCNT), and 1569–1629 (PCTQ…EDCE). Residues 1632–1672 (EPPRCERDRLSFGFCETLRLLGRCQLPTIRTQCCRSCSPPS) enclose the PLAC domain. A disordered region spans residues 1666-1686 (RSCSPPSHGAPSRGHQRVARR).

In terms of assembly, interacts with COMP. Zn(2+) is required as a cofactor. In terms of processing, N-glycosylated. Can be O-fucosylated by POFUT2 on a serine or a threonine residue found within the consensus sequence C1-X(2)-(S/T)-C2-G of the TSP type-1 repeat domains where C1 and C2 are the first and second cysteine residue of the repeat, respectively. Fucosylated repeats can then be further glycosylated by the addition of a beta-1,3-glucose residue by the glucosyltransferase, B3GALTL. Fucosylation mediates the efficient secretion of ADAMTS family members. Can also be C-glycosylated with one or two mannose molecules on tryptophan residues within the consensus sequence W-X-X-W of the TPRs. N- and C-glycosylations can also facilitate secretion. Post-translationally, O-glycosylated proteoglycan; contains chondroitin sulfate. May be cleaved by a furin endopeptidase. The precursor is sequentially processed. Expressed in heart, brain, placenta, lung, liver, skeletal muscle, kidney and pancreas. Detected in meniscus, bone, tendon, cartilage, synovium, fat and ligaments.

It localises to the secreted. The protein localises to the extracellular space. Its subcellular location is the extracellular matrix. Its function is as follows. Metalloprotease. Was previously shown to degrade COMP. However, a later study found no activity against COMP. The protein is A disintegrin and metalloproteinase with thrombospondin motifs 7 (ADAMTS7) of Homo sapiens (Human).